A 228-amino-acid chain; its full sequence is Tumor necrosis factor receptor superfamily member 18 (228 aa).

The N-terminal stretch at 1-19 (MGAWAMLYGVSMLCVLDLG) is a signal peptide. The Extracellular portion of the chain corresponds to 20–153 (QPSVVEEPGC…EPLPTEQYGH (134 aa)). TNFR-Cys repeat units follow at residues 28–61 (GCGP…ERCI), 62–101 (CVTP…FRCV), and 102–142 (ACAM…AVCI). 5 disulfides stabilise this stretch: C29/C44, C62/C74, C69/C82, C103/C122, and C116/C141. 2 N-linked (GlcNAc...) asparagine glycosylation sites follow: N36 and N40. N121 and N134 each carry an N-linked (GlcNAc...) asparagine glycan. The helical transmembrane segment at 154–174 (LTVIFLVMAACIFFLTTVQLG) threads the bilayer. The Cytoplasmic portion of the chain corresponds to 175–228 (LHIWQLRRQHMCPRETQPFAEVQLSAEDACSFQFPEEERGEQTEEKCHLGGRWP).

As to quaternary structure, binds to TRAF1, TRAF2, and TRAF3, but not TRAF5 and TRAF6. Binds through its C-terminus to SIVA1/SIVA. In terms of tissue distribution, preferentially expressed in activated T lymphocytes.

It is found in the cell membrane. The protein resides in the secreted. Receptor for TNFSF18. Seems to be involved in interactions between activated T-lymphocytes and endothelial cells and in the regulation of T-cell receptor-mediated cell death. Mediated NF-kappa-B activation via the TRAF2/NIK pathway. In Mus musculus (Mouse), this protein is Tumor necrosis factor receptor superfamily member 18 (Tnfrsf18).